A 179-amino-acid chain; its full sequence is Peptide deformylase (179 aa).

Fe cation contacts are provided by Cys102 and His144. Residue Glu145 is part of the active site. His148 lines the Fe cation pocket.

It belongs to the polypeptide deformylase family. Fe(2+) is required as a cofactor.

The catalysed reaction is N-terminal N-formyl-L-methionyl-[peptide] + H2O = N-terminal L-methionyl-[peptide] + formate. In terms of biological role, removes the formyl group from the N-terminal Met of newly synthesized proteins. Requires at least a dipeptide for an efficient rate of reaction. N-terminal L-methionine is a prerequisite for activity but the enzyme has broad specificity at other positions. The chain is Peptide deformylase from Wolbachia sp. subsp. Drosophila simulans (strain wRi).